The chain runs to 143 residues: ATP synthase subunit b' (143 aa).

Residues 6 to 26 form a helical membrane-spanning segment; the sequence is ATLPLMALQFVVLAFLLNAIF.

Belongs to the ATPase B chain family. As to quaternary structure, F-type ATPases have 2 components, F(1) - the catalytic core - and F(0) - the membrane proton channel. F(1) has five subunits: alpha(3), beta(3), gamma(1), delta(1), epsilon(1). F(0) has four main subunits: a(1), b(1), b'(1) and c(10-14). The alpha and beta chains form an alternating ring which encloses part of the gamma chain. F(1) is attached to F(0) by a central stalk formed by the gamma and epsilon chains, while a peripheral stalk is formed by the delta, b and b' chains.

The protein resides in the cellular thylakoid membrane. In terms of biological role, f(1)F(0) ATP synthase produces ATP from ADP in the presence of a proton or sodium gradient. F-type ATPases consist of two structural domains, F(1) containing the extramembraneous catalytic core and F(0) containing the membrane proton channel, linked together by a central stalk and a peripheral stalk. During catalysis, ATP synthesis in the catalytic domain of F(1) is coupled via a rotary mechanism of the central stalk subunits to proton translocation. Component of the F(0) channel, it forms part of the peripheral stalk, linking F(1) to F(0). The b'-subunit is a diverged and duplicated form of b found in plants and photosynthetic bacteria. The polypeptide is ATP synthase subunit b' (Synechocystis sp. (strain ATCC 27184 / PCC 6803 / Kazusa)).